A 158-amino-acid polypeptide reads, in one-letter code: uncharacterized protein (158 aa).

The HTH asnC-type domain occupies 12–73; that stretch reads LDEIDRAILR…LINPFKAGYE (62 aa). Positions 31 to 50 form a DNA-binding region, H-T-H motif; sequence YSEISRRINVPESTVRARVN.

This is an uncharacterized protein from Pyrococcus horikoshii (strain ATCC 700860 / DSM 12428 / JCM 9974 / NBRC 100139 / OT-3).